The chain runs to 200 residues: Recombination protein RecR (200 aa).

The segment at 58–73 (CQKCHNISDTTLCSIC) adopts a C4-type zinc-finger fold. Residues 81–176 (GLICVVENIQ…KLSNIARGVA (96 aa)) enclose the Toprim domain.

It belongs to the RecR family.

Its function is as follows. May play a role in DNA repair. It seems to be involved in an RecBC-independent recombinational process of DNA repair. It may act with RecF and RecO. This Amoebophilus asiaticus (strain 5a2) protein is Recombination protein RecR.